The chain runs to 1090 residues: Leucine--tRNA ligase, cytoplasmic (1090 aa).

N-acetylserine is present on Ser-2. The 'HIGH' region motif lies at 66–76 (PYMNGVMHAGH). Thr-142 carries the phosphothreonine modification. The 'KMSKS' region motif lies at 729–733 (KMSKS). Lys-732 provides a ligand contact to ATP.

It belongs to the class-I aminoacyl-tRNA synthetase family.

The protein localises to the cytoplasm. It catalyses the reaction tRNA(Leu) + L-leucine + ATP = L-leucyl-tRNA(Leu) + AMP + diphosphate. The polypeptide is Leucine--tRNA ligase, cytoplasmic (CDC60) (Saccharomyces cerevisiae (strain ATCC 204508 / S288c) (Baker's yeast)).